The primary structure comprises 286 residues: 3-amino-tetrahydro-pyrrolizinone reductase (286 aa).

Catalysis depends on Tyr-146, which acts as the Proton acceptor.

This sequence belongs to the short-chain dehydrogenases/reductases (SDR) family.

It carries out the reaction 3-amino-5,6,7,7a-tetrahydro-1H-pyrrolizin-1-one + AH2 = 3-amino-tetrahydro-1H-pyrrolizin-1-ol + A. Its function is as follows. Involved in the biosynthetic pathway of pyrrolizwilline, a pyrrolizidine alkaloid. Catalyzes the reduction of 3-amino-tetrahydro-pyrrolizinone to 3-amino-tetrahydro-pyrrolizinol. In Xenorhabdus hominickii, this protein is 3-amino-tetrahydro-pyrrolizinone reductase (xhpD).